A 234-amino-acid polypeptide reads, in one-letter code: tRNA (guanine-N(1)-)-methyltransferase (234 aa).

Residues G115 and 135–140 each bind S-adenosyl-L-methionine; that span reads VGDYIL.

It belongs to the RNA methyltransferase TrmD family. Homodimer.

The protein localises to the cytoplasm. The catalysed reaction is guanosine(37) in tRNA + S-adenosyl-L-methionine = N(1)-methylguanosine(37) in tRNA + S-adenosyl-L-homocysteine + H(+). Its function is as follows. Specifically methylates guanosine-37 in various tRNAs. This is tRNA (guanine-N(1)-)-methyltransferase from Rickettsia akari (strain Hartford).